The primary structure comprises 1461 residues: Selection and upkeep of intraepithelial T-cells protein 5 (1461 aa).

A signal peptide spans 1-24 (MGAVGIPLTAHCVVLFLLQMVALS). Residues 25–1306 (SEQFTVNGLE…CNKRNPFWKK (1282 aa)) are Extracellular-facing. An Ig-like V-type domain is found at 26-139 (EQFTVNGLES…FYEEHIIDVK (114 aa)). 2 disulfide bridges follow: Cys-49–Cys-123 and Cys-163–Cys-217. One can recognise an Ig-like C1-type domain in the interval 142-231 (ATSSDIQILM…FVTHQEESIS (90 aa)). N-linked (GlcNAc...) asparagine glycosylation is present at Asn-200. Residues 1307 to 1327 (YALDLGISVFTIIVVTLIMHL) traverse the membrane as a helical segment. Residues 1328-1345 (KQREADQHFELNTLWSKD) are Cytoplasmic-facing. The helical transmembrane segment at 1346 to 1366 (TSVILCVLIMFNNRLKALIYF) threads the bilayer. The Extracellular segment spans residues 1367 to 1387 (RLYGFSPPGKAHKYIVNYILR). A helical membrane pass occupies residues 1388-1408 (FSHPVFCIVYSATILYMYLQI). Residues 1409-1427 (QNKDSLFSLYNSWMVEMEM) are Cytoplasmic-facing. Residues 1428 to 1448 (VLIFLLVIFNVKNIATVLLYF) form a helical membrane-spanning segment. The Extracellular segment spans residues 1449–1461 (DSTTLRLFFWIKG).

Belongs to the SKINT family. In terms of tissue distribution, expressed in skin and, to a lower extent, testis.

Its subcellular location is the membrane. Functionally, may act by engaging a cell surface molecule on immature T-cells in the embryonic thymus. This Mus musculus (Mouse) protein is Selection and upkeep of intraepithelial T-cells protein 5 (Skint5).